The following is a 287-amino-acid chain: MGKIKLKNRKALVVYDNKDDFEKNQTFALSLIKELQKKKLNAEVLLLENKDINFEAKINEAELILNRSRKVDFLKTNNQINTFLVNPFNVVFIANDKYETYKWLKQNRFLTVNSSLLSKETIKSFPVIVKKRNSHGGKDVHLVNSADEIKHLNIENATEWIVQPFLSIGTVEYRAYILFGKIIKVIKKISNANQFKANFSQGAEVSLFKLKWFTKRKIKKIAKRLREGYYAIDFFLNRYNRVIVNEIEDAAGARALVQLCPDLNITKIIIRTIISKFKKFLKKKLIS.

Residues 115 to 287 form the ATP-grasp domain; sequence SLLSKETIKS…KKFLKKKLIS (173 aa).

This is an uncharacterized protein from Mycoplasma genitalium (strain ATCC 33530 / DSM 19775 / NCTC 10195 / G37) (Mycoplasmoides genitalium).